The chain runs to 184 residues: Photosystem I assembly protein Ycf4 (184 aa).

2 helical membrane passes run 19-39 (ISNF…VLVG) and 57-77 (ILFF…LFIS).

It belongs to the Ycf4 family.

It localises to the plastid. Its subcellular location is the chloroplast thylakoid membrane. In terms of biological role, seems to be required for the assembly of the photosystem I complex. The chain is Photosystem I assembly protein Ycf4 from Eucalyptus globulus subsp. globulus (Tasmanian blue gum).